We begin with the raw amino-acid sequence, 20 residues long: Luminal-binding protein (20 aa).

The protein belongs to the heat shock protein 70 family.

The protein localises to the endoplasmic reticulum lumen. In terms of biological role, probably plays a role in facilitating the assembly of multimeric protein complexes inside the ER. The sequence is that of Luminal-binding protein from Phaseolus vulgaris (Kidney bean).